A 616-amino-acid chain; its full sequence is Sodium- and chloride-dependent transporter XTRP3 (616 aa).

Residues 1 to 11 (MRLAIKRRASR) show a composition bias toward basic residues. The tract at residues 1-26 (MRLAIKRRASRGQRPGPDEKRARDME) is disordered. Over 1 to 37 (MRLAIKRRASRGQRPGPDEKRARDMEKARPQWGNPLQ) the chain is Cytoplasmic. Residues 16–26 (GPDEKRARDME) show a composition bias toward basic and acidic residues. Residues 38-58 (FVFACISYAVGLGNVWRFPYL) traverse the membrane as a helical segment. Over 59–66 (CQMYGGGS) the chain is Extracellular. A helical transmembrane segment spans residues 67–87 (FLVPYLIMLIVEGMPLLYLEL). Residues 88–103 (AVGQRMRQGSIGAWRT) are Cytoplasmic-facing. A helical transmembrane segment spans residues 104–124 (ISPYLSGVGVASVVVSFFLSM). Topologically, residues 125 to 189 (YYNVINAWGF…ISPSIQENGG (65 aa)) are extracellular. A glycan (N-linked (GlcNAc...) asparagine) is linked at Asn-155. The chain crosses the membrane as a helical span at residues 190 to 210 (VQWEPALCLTLAWLMVYLCIL). The Cytoplasmic segment spans residues 211-218 (RGTESTGK). The chain crosses the membrane as a helical span at residues 219–239 (VVYFTALMPYCVLIIYLVRGL). Topologically, residues 240-265 (TLHGATNGLMYMFTPKIEQLANPKAW) are extracellular. A helical membrane pass occupies residues 266–286 (INAATQIFFSLGLGFGSLIAF). Residues 287-300 (ASYNEPSNDCQKHA) are Cytoplasmic-facing. Residues 301–321 (VIVSVINSSTSIFASIVTFSI) form a helical membrane-spanning segment. The Extracellular segment spans residues 322-413 (YGFKATFNYE…EAIKNMEVSQ (92 aa)). Asn-381 carries N-linked (GlcNAc...) asparagine glycosylation. The chain crosses the membrane as a helical span at residues 414–434 (LWSVLYFFMLLMLGMGSMLGN). Topologically, residues 435–455 (TAAILTPLTDSKVISSYLPKE) are cytoplasmic. Residues 456–476 (AISGLVCLINCAVGMVFTMEA) traverse the membrane as a helical segment. Residues 477-489 (GNYWFDIFNDYAA) are Extracellular-facing. The helical transmembrane segment at 490–510 (TLSLLLIVLVETIAVCYVYGL) threads the bilayer. The Cytoplasmic portion of the chain corresponds to 511-533 (RRFESDLRAMTGRPLNWYWKAMW). Residues 534–554 (AFVSPLLIIGLFIFYLSDYIL) form a helical membrane-spanning segment. Residues 555–578 (TGTLQYQAWDATQGQLVTKDYPPH) lie on the Extracellular side of the membrane. The helical transmembrane segment at 579–599 (ALAVIGLLVASSTMCIPLVAL) threads the bilayer. Topologically, residues 600 to 616 (GTFIRNRLKRGGSSPVA) are cytoplasmic.

The protein belongs to the sodium:neurotransmitter symporter (SNF) (TC 2.A.22) family. SLC6A20 subfamily. Highly expressed in epithelial cells of duodenum, jejunum, ileum, stomach, cecum, colon and kidney proximal tubule. Also expressed in the choroid plexus, microglia and meniges of the brain and in the ovary.

The protein resides in the apical cell membrane. It carries out the reaction L-proline(out) + chloride(out) + 2 Na(+)(out) = L-proline(in) + chloride(in) + 2 Na(+)(in). The enzyme catalyses 4-hydroxy-L-proline(out) + chloride(out) + 2 Na(+)(out) = 4-hydroxy-L-proline(in) + chloride(in) + 2 Na(+)(in). The catalysed reaction is 2-methyl-2-(methylamino)propanoate(out) + chloride(out) + 2 Na(+)(out) = 2-methyl-2-(methylamino)propanoate(in) + chloride(in) + 2 Na(+)(in). It catalyses the reaction L-pipecolate(out) + chloride(out) + 2 Na(+)(out) = L-pipecolate(in) + chloride(in) + 2 Na(+)(in). It carries out the reaction glycine betaine(out) + chloride(out) + 2 Na(+)(out) = glycine betaine(in) + chloride(in) + 2 Na(+)(in). The enzyme catalyses glycine(out) + chloride(out) + 2 Na(+)(out) = glycine(in) + chloride(in) + 2 Na(+)(in). In terms of biological role, mediates the Na(+)- and Cl(-)-dependent uptake of imino acids such as L-proline, N-methyl-L-proline and pipecolate as well as N-methylated amino acids. Also transports glycine, regulates proline and glycine homeostasis in the brain playing a role in the modulation of NMDAR currents. This chain is Sodium- and chloride-dependent transporter XTRP3, found in Rattus norvegicus (Rat).